Here is a 321-residue protein sequence, read N- to C-terminus: Long form salivary protein D7L1 (321 aa).

An N-terminal signal peptide occupies residues 1–17 (MKLPLLLAIVTTFSVVA). Intrachain disulfides connect Cys34-Cys71 and Cys67-Cys124. A leukotriene E4-binding site is contributed by Trp55. Leukotriene E4-binding residues include Gly148 and Lys167. Disulfide bonds link Cys175–Cys210, Cys191–Cys319, and Cys250–Cys268. Noradrenaline contacts are provided by Glu176, Arg194, and His207. Noradrenaline is bound by residues Asp283 and Glu286.

It belongs to the PBP/GOBP family. As to quaternary structure, (Microbial infection) Interacts with envelope protein of dengue virus type 2. As to expression, saliva (at protein level). Female salivary gland (at protein level). Detected in the head and thorax of the female mosquitoes, where the salivary glands are located. Expressed in the distal-lateral and medial lobes of the female salivary gland but not in the carcass. No or low-level expression in the adult male mosquito tissues.

It is found in the secreted. Its function is as follows. Modulates blood feeding of female mosquitoes on vertebrate species by binding and sequestering different mediators involved in the host response, such as biogenic amines and eicosanoids. Binds serotonin, histamine, leukotriene B4, leukotriene C4, leukotriene D4, leukotriene E4, adrenaline and noradrenaline. Does not bind tryptamine and U-46619, a stable analog of thromboxane A2. Exhibits vasodilating activity. Inhibits agonist-induced platelet aggregation but not blood clotting. Inhibits noradrenaline-induced smooth muscle contraction. Promotes an influx of host neutrophils at the inoculation site. Functionally, (Microbial infection) Probably promotes Plasmodium gallinaceum oocyst development in mosquito midgut. (Microbial infection) Exhibits antiviral activity against dengue virus type 2 probably through a direct interaction with dengue virus virions. In Aedes aegypti (Yellowfever mosquito), this protein is Long form salivary protein D7L1 (D7).